An 832-amino-acid polypeptide reads, in one-letter code: Adhesin AWP2 (832 aa).

Residues 1 to 25 (MRKLPLFMAWKFWLICLYIIKVAST) form the signal peptide. Residues Asn-187, Asn-290, Asn-372, Asn-390, Asn-435, Asn-448, Asn-472, Asn-482, Asn-507, Asn-512, Asn-515, Asn-534, Asn-562, Asn-579, Asn-695, and Asn-721 are each glycosylated (N-linked (GlcNAc...) asparagine). A disordered region spans residues 722-747 (QTTSPSMHTTSLVGSENGVSAKTVND).

The protein resides in the secreted. It is found in the cell wall. Mediates cell-substrate adhesion and promotes biofilm formation. In Candida glabrata (strain ATCC 2001 / BCRC 20586 / JCM 3761 / NBRC 0622 / NRRL Y-65 / CBS 138) (Yeast), this protein is Adhesin AWP2.